Here is a 232-residue protein sequence, read N- to C-terminus: Phosphoglycolate phosphatase (232 aa).

D8 functions as the Nucleophile in the catalytic mechanism. Positions 8 and 10 each coordinate Mg(2+). K155 is a substrate binding site. D178 and D182 together coordinate Mg(2+).

This sequence belongs to the archaeal SPP-like hydrolase family. Mg(2+) serves as cofactor.

The enzyme catalyses 2-phosphoglycolate + H2O = glycolate + phosphate. Functionally, catalyzes the dephosphorylation of 2-phosphoglycolate. The protein is Phosphoglycolate phosphatase of Methanospirillum hungatei JF-1 (strain ATCC 27890 / DSM 864 / NBRC 100397 / JF-1).